Consider the following 72-residue polypeptide: Translation initiation factor IF-1 (72 aa).

In terms of domain architecture, S1-like spans 1-72; it reads MAKEDNIEMQ…SKGRIVFRSR (72 aa).

This sequence belongs to the IF-1 family. As to quaternary structure, component of the 30S ribosomal translation pre-initiation complex which assembles on the 30S ribosome in the order IF-2 and IF-3, IF-1 and N-formylmethionyl-tRNA(fMet); mRNA recruitment can occur at any time during PIC assembly.

The protein localises to the cytoplasm. One of the essential components for the initiation of protein synthesis. Stabilizes the binding of IF-2 and IF-3 on the 30S subunit to which N-formylmethionyl-tRNA(fMet) subsequently binds. Helps modulate mRNA selection, yielding the 30S pre-initiation complex (PIC). Upon addition of the 50S ribosomal subunit IF-1, IF-2 and IF-3 are released leaving the mature 70S translation initiation complex. The polypeptide is Translation initiation factor IF-1 (Shewanella loihica (strain ATCC BAA-1088 / PV-4)).